We begin with the raw amino-acid sequence, 491 residues long: MANYFNTLNLRQQLAQLGKCRFMGRDEFADGASYLQGKKVVIVGCGAQGLNQGLNMRDSGLDISYALRKEAITEKRASWRKATENGFKVGTYEELIPQADLVVNLTPDKQHSDVVRSVQPLMKDGAALGYSHGFNIVEVGEQIRKDITVVMVAPKCPGTEVREEYKRGFGVPTLIAVHPENDPKGEGMAIAKAWVAATGGHRAGVLESSFVAEVKSDLMGEQTILCGMLQAGSLLCFDKLVAEGTDPAYAEKLIQFGWETITEALKQGGITLMMDRLSNPAKLRAYALSEQLKEIMAPLFQKHMDDIISGEFSSGMMADWANDDKKLLTWREETGKTAFETAPQFEGKIGEQEYFDKGVLMIAMVKAGVELAFETMVDSGIIEESAYYESLHELPLIANTIARKRLYEMNVVISDTAEYGNYLFSYACVPLLKPFMAELQPGDLGSAIPEGAVDNAQLRDVNDAIRSHAIEQVGKKLRGYMTDMKRIAVAG.

The region spanning 15 to 208 (AQLGKCRFMG…GGHRAGVLES (194 aa)) is the KARI N-terminal Rossmann domain. Residues 45–48 (CGAQ), R68, R76, S78, and 108–110 (DKQ) contribute to the NADP(+) site. The active site involves H132. G158 contributes to the NADP(+) binding site. 2 consecutive KARI C-terminal knotted domains span residues 209-344 (SFVA…TAPQ) and 345-484 (FEGK…MTDM). Mg(2+) contacts are provided by D217, E221, E389, and E393. S414 provides a ligand contact to substrate.

The protein belongs to the ketol-acid reductoisomerase family. It depends on Mg(2+) as a cofactor.

It carries out the reaction (2R)-2,3-dihydroxy-3-methylbutanoate + NADP(+) = (2S)-2-acetolactate + NADPH + H(+). It catalyses the reaction (2R,3R)-2,3-dihydroxy-3-methylpentanoate + NADP(+) = (S)-2-ethyl-2-hydroxy-3-oxobutanoate + NADPH + H(+). Its pathway is amino-acid biosynthesis; L-isoleucine biosynthesis; L-isoleucine from 2-oxobutanoate: step 2/4. It participates in amino-acid biosynthesis; L-valine biosynthesis; L-valine from pyruvate: step 2/4. Involved in the biosynthesis of branched-chain amino acids (BCAA). Catalyzes an alkyl-migration followed by a ketol-acid reduction of (S)-2-acetolactate (S2AL) to yield (R)-2,3-dihydroxy-isovalerate. In the isomerase reaction, S2AL is rearranged via a Mg-dependent methyl migration to produce 3-hydroxy-3-methyl-2-ketobutyrate (HMKB). In the reductase reaction, this 2-ketoacid undergoes a metal-dependent reduction by NADPH to yield (R)-2,3-dihydroxy-isovalerate. The polypeptide is Ketol-acid reductoisomerase (NADP(+)) (Salmonella schwarzengrund (strain CVM19633)).